We begin with the raw amino-acid sequence, 452 residues long: Phosphoglucosamine mutase (452 aa).

The active-site Phosphoserine intermediate is serine 104. Mg(2+)-binding residues include serine 104, aspartate 244, aspartate 246, and aspartate 248. A Phosphoserine modification is found at serine 104.

The protein belongs to the phosphohexose mutase family. Mg(2+) is required as a cofactor. Post-translationally, activated by phosphorylation.

It carries out the reaction alpha-D-glucosamine 1-phosphate = D-glucosamine 6-phosphate. Functionally, catalyzes the conversion of glucosamine-6-phosphate to glucosamine-1-phosphate. In Pediococcus pentosaceus (strain ATCC 25745 / CCUG 21536 / LMG 10740 / 183-1w), this protein is Phosphoglucosamine mutase.